Reading from the N-terminus, the 187-residue chain is Orotate phosphoribosyltransferase (187 aa).

5-phospho-alpha-D-ribose 1-diphosphate-binding positions include Arg-103, Lys-104, Lys-107, and 129–137 (EDVTTSGGS). Positions 133 and 161 each coordinate orotate.

This sequence belongs to the purine/pyrimidine phosphoribosyltransferase family. PyrE subfamily. Homodimer. Mg(2+) serves as cofactor.

The catalysed reaction is orotidine 5'-phosphate + diphosphate = orotate + 5-phospho-alpha-D-ribose 1-diphosphate. It participates in pyrimidine metabolism; UMP biosynthesis via de novo pathway; UMP from orotate: step 1/2. Functionally, catalyzes the transfer of a ribosyl phosphate group from 5-phosphoribose 1-diphosphate to orotate, leading to the formation of orotidine monophosphate (OMP). This Methanosarcina acetivorans (strain ATCC 35395 / DSM 2834 / JCM 12185 / C2A) protein is Orotate phosphoribosyltransferase.